A 2773-amino-acid polypeptide reads, in one-letter code: Peramine synthetase A (2773 aa).

The segment at 246–644 (FEDQVYSQPL…GRKDAQVKIR (399 aa)) is adenylation 1. The Carrier 1 domain occupies 774-850 (QPTCEMEERM…DLAKNCSQTL (77 aa)). Ser-811 carries the post-translational modification O-(pantetheine 4'-phosphoryl)serine. Residues 888–1301 (QDAYPCTRLQ…MSSAEDLEQI (414 aa)) form a condensation region. The tract at residues 1321 to 1720 (ADQVQARPDS…GRKDTQVKVR (400 aa)) is adenylation 2. Positions 1810-1949 (IGRDFVGWSS…IIQHLASLGS (140 aa)) are methylation (Met) domain. The tract at residues 2250–2271 (MLSESLQQKAPPTARKRLPSTA) is disordered. The 79-residue stretch at 2267-2345 (LPSTAPERAM…HLLQTAAAGV (79 aa)) folds into the Carrier 2 domain. Position 2304 is an O-(pantetheine 4'-phosphoryl)serine (Ser-2304). Residues 2397–2715 (TVVLTGANGF…LQDLADTARS (319 aa)) form a thiesterase (TE) domain region.

The protein belongs to the NRP synthetase family. Requires pantetheine 4'-phosphate as cofactor.

It catalyses the reaction (S)-1-pyrroline-5-carboxylate + L-arginine + S-adenosyl-L-methionine + 2 ATP = peramine + 2 AMP + S-adenosyl-L-homocysteine + 2 diphosphate + H2O + 2 H(+). Its function is as follows. Nonribosomal peptide synthetase involved in the biosynthesis of peramine, a pyrrolopyrazine synthesized in association with the grass host that protects the plant from insect herbivory. The single multifunctional NRPS perA seems to be responsible for all catalytic steps in the biosynthesis of peramine. The condensation domain of perA is proposed to catalyze formation of a peptide bond between 1-pyrroline-5-carboxylate and arginine. The methylation domain of perA would catalyze the N-methylation of the alpha-amino group of arginine. The reductase domain is proposed to be responsible for reduction of the thioester and the cyclization to form an iminium ion resulting in release from the peptide synthetase. Deprotonation of this intermediate and oxidation of the pyrroline ring would give rise to peramine. This final oxidation to give the pyrrole functionality may be spontaneous. This is Peramine synthetase A from Epichloe festucae (strain Fl1).